A 575-amino-acid chain; its full sequence is Kelch repeat and BTB domain-containing protein 8 (575 aa).

Positions 23–91 (TDIVVEVDHG…AYTSRVILTE (69 aa)) constitute a BTB domain. A BACK domain is found at 126-228 (SIGVFIFADH…MEDAFIEKIP (103 aa)). Kelch repeat units follow at residues 310–364 (DIYI…YCCG), 365–415 (KMYA…EHKE), 417–455 (IYVL…VYKD), 457–506 (IYYI…LFQN), and 516–562 (QVTV…FECA).

It belongs to the KBTBD8 family. As to quaternary structure, component of the BCR(KBTBD8) E3 ubiquitin ligase complex, at least composed of CUL3, KBTBD8 and RBX1.

Its subcellular location is the cytoplasm. It is found in the cytoskeleton. The protein localises to the spindle. The protein resides in the golgi apparatus. Functionally, substrate-specific adapter of a BCR (BTB-CUL3-RBX1) E3 ubiquitin ligase complex that acts as a regulator of neural crest specification. The BCR(KBTBD8) complex acts by mediating monoubiquitination of NOLC1 and TCOF1: monoubiquitination promotes the formation of a NOLC1-TCOF1 complex that acts as a platform to connect RNA polymerase I with enzymes responsible for ribosomal processing and modification, leading to remodel the translational program of differentiating cells in favor of neural crest specification. This chain is Kelch repeat and BTB domain-containing protein 8, found in Rattus norvegicus (Rat).